The chain runs to 324 residues: tRNA uridine(34) hydroxylase (324 aa).

Residues 122 to 218 (QENRCLILDV…YGQQVGTGKW (97 aa)) enclose the Rhodanese domain. C178 (cysteine persulfide intermediate) is an active-site residue.

It belongs to the TrhO family.

The catalysed reaction is uridine(34) in tRNA + AH2 + O2 = 5-hydroxyuridine(34) in tRNA + A + H2O. Functionally, catalyzes oxygen-dependent 5-hydroxyuridine (ho5U) modification at position 34 in tRNAs. The sequence is that of tRNA uridine(34) hydroxylase from Chlamydia pneumoniae (Chlamydophila pneumoniae).